A 148-amino-acid chain; its full sequence is Small ribosomal subunit protein uS13 (148 aa).

Belongs to the universal ribosomal protein uS13 family. Part of the 30S ribosomal subunit. Forms a loose heterodimer with protein S19. Forms two bridges to the 50S subunit in the 70S ribosome.

Its function is as follows. Located at the top of the head of the 30S subunit, it contacts several helices of the 16S rRNA. In the 70S ribosome it contacts the 23S rRNA (bridge B1a) and protein L5 of the 50S subunit (bridge B1b), connecting the 2 subunits; these bridges are implicated in subunit movement. The polypeptide is Small ribosomal subunit protein uS13 (Pyrococcus horikoshii (strain ATCC 700860 / DSM 12428 / JCM 9974 / NBRC 100139 / OT-3)).